Here is a 256-residue protein sequence, read N- to C-terminus: MKEPLKIGLMDSGMGGLSVLKELLKYDSELEIVYYGDLKNSPYGEKDASEVLELVRSVCNFLQKENVSAILLACNTATSAAAQTLRKEFSIPIFGMEPAIKPAILQNPGKKVALLATPVTQREEKLQRLKSELKAEELVLSISCPGLAGLVDQGDFDKAEKYLRPILANLQEQDVENLVLGCTHYVFLKQIILKNFPNVKIYDGNSGTIKHLLNSLQVPRVILNGSQNNRSIYKLILNSEKEFHFRLASKLLSLKE.

Substrate is bound by residues 11-12 (DS) and 43-44 (YG). The active-site Proton donor/acceptor is Cys74. Residue 75 to 76 (NT) participates in substrate binding. Catalysis depends on Cys182, which acts as the Proton donor/acceptor. 183–184 (TH) provides a ligand contact to substrate.

The protein belongs to the aspartate/glutamate racemases family.

The enzyme catalyses L-glutamate = D-glutamate. Its pathway is cell wall biogenesis; peptidoglycan biosynthesis. In terms of biological role, provides the (R)-glutamate required for cell wall biosynthesis. The chain is Glutamate racemase from Leptospira interrogans serogroup Icterohaemorrhagiae serovar copenhageni (strain Fiocruz L1-130).